Here is a 1024-residue protein sequence, read N- to C-terminus: Carbamoyl phosphate synthase large chain (1024 aa).

The interval 1–402 (MPKRTDLQTI…SLQKALRSTE (402 aa)) is carboxyphosphate synthetic domain. Positions 129, 169, 175, 176, 208, 210, 215, 241, 242, 243, 285, and 299 each coordinate ATP. Positions 133–328 (QAAMKKIGVE…IAKIAALLAV (196 aa)) constitute an ATP-grasp 1 domain. Residues glutamine 285, glutamate 299, and asparagine 301 each coordinate Mg(2+). Mn(2+)-binding residues include glutamine 285, glutamate 299, and asparagine 301. The tract at residues 403-546 (GDIRGVYAEM…YSTYEWEDEV (144 aa)) is oligomerization domain. The segment at 547 to 929 (APTDKPKVVI…AFYRAQLGAK (383 aa)) is carbamoyl phosphate synthetic domain. One can recognise an ATP-grasp 2 domain in the interval 671–863 (NALCERLGLP…LAKSAARIAA (193 aa)). 10 residues coordinate ATP: arginine 707, glutamine 747, leucine 749, glutamate 754, glycine 779, valine 780, histidine 781, serine 782, glutamine 822, and glutamate 834. Mg(2+) contacts are provided by glutamine 822, glutamate 834, and asparagine 836. Mn(2+) contacts are provided by glutamine 822, glutamate 834, and asparagine 836. Residues 930 to 1024 (NYLPLEGTAL…GVRSLQEWVK (95 aa)) form the MGS-like domain. Positions 930-1024 (NYLPLEGTAL…GVRSLQEWVK (95 aa)) are allosteric domain.

The protein belongs to the CarB family. As to quaternary structure, composed of two chains; the small (or glutamine) chain promotes the hydrolysis of glutamine to ammonia, which is used by the large (or ammonia) chain to synthesize carbamoyl phosphate. Tetramer of heterodimers (alpha,beta)4. It depends on Mg(2+) as a cofactor. Mn(2+) is required as a cofactor.

It catalyses the reaction hydrogencarbonate + L-glutamine + 2 ATP + H2O = carbamoyl phosphate + L-glutamate + 2 ADP + phosphate + 2 H(+). The enzyme catalyses hydrogencarbonate + NH4(+) + 2 ATP = carbamoyl phosphate + 2 ADP + phosphate + 2 H(+). Its pathway is amino-acid biosynthesis; L-arginine biosynthesis; carbamoyl phosphate from bicarbonate: step 1/1. It participates in pyrimidine metabolism; UMP biosynthesis via de novo pathway; (S)-dihydroorotate from bicarbonate: step 1/3. Its function is as follows. Large subunit of the glutamine-dependent carbamoyl phosphate synthetase (CPSase). CPSase catalyzes the formation of carbamoyl phosphate from the ammonia moiety of glutamine, carbonate, and phosphate donated by ATP, constituting the first step of 2 biosynthetic pathways, one leading to arginine and/or urea and the other to pyrimidine nucleotides. The large subunit (synthetase) binds the substrates ammonia (free or transferred from glutamine from the small subunit), hydrogencarbonate and ATP and carries out an ATP-coupled ligase reaction, activating hydrogencarbonate by forming carboxy phosphate which reacts with ammonia to form carbamoyl phosphate. This chain is Carbamoyl phosphate synthase large chain, found in Deinococcus radiodurans (strain ATCC 13939 / DSM 20539 / JCM 16871 / CCUG 27074 / LMG 4051 / NBRC 15346 / NCIMB 9279 / VKM B-1422 / R1).